The sequence spans 272 residues: Undecaprenyl-diphosphatase (272 aa).

The next 7 helical transmembrane spans lie at 22–42, 45–65, 92–112, 118–138, 189–209, 228–248, and 251–271; these read FLPV…GFTG, AETF…VVFW, SHII…HDVI, PQSV…AEIL, YTAS…ASGL, VGFV…LALI, and ISFI…YWVF.

Belongs to the UppP family.

The protein resides in the cell inner membrane. The catalysed reaction is di-trans,octa-cis-undecaprenyl diphosphate + H2O = di-trans,octa-cis-undecaprenyl phosphate + phosphate + H(+). Functionally, catalyzes the dephosphorylation of undecaprenyl diphosphate (UPP). Confers resistance to bacitracin. The protein is Undecaprenyl-diphosphatase of Photorhabdus laumondii subsp. laumondii (strain DSM 15139 / CIP 105565 / TT01) (Photorhabdus luminescens subsp. laumondii).